A 314-amino-acid chain; its full sequence is tRNA dimethylallyltransferase (314 aa).

12–19 (GPTASGKT) provides a ligand contact to ATP. 14–19 (TASGKT) is a substrate binding site. 4 interaction with substrate tRNA regions span residues 37–40 (DSAL), 161–165 (QRINR), 242–247 (RCVGYR), and 275–282 (KRQITWLR).

Belongs to the IPP transferase family. Monomer. The cofactor is Mg(2+).

It carries out the reaction adenosine(37) in tRNA + dimethylallyl diphosphate = N(6)-dimethylallyladenosine(37) in tRNA + diphosphate. Catalyzes the transfer of a dimethylallyl group onto the adenine at position 37 in tRNAs that read codons beginning with uridine, leading to the formation of N6-(dimethylallyl)adenosine (i(6)A). The protein is tRNA dimethylallyltransferase of Mannheimia succiniciproducens (strain KCTC 0769BP / MBEL55E).